Consider the following 333-residue polypeptide: Ketol-acid reductoisomerase (NADP(+)) (333 aa).

The KARI N-terminal Rossmann domain maps to 1–171; it reads MSNHTQPKIA…GGARANIIKT (171 aa). NADP(+)-binding positions include 14–17, Arg-37, Thr-42, and 72–75; these read YGSQ and DMVQ. The active site involves His-97. An NADP(+)-binding site is contributed by Gly-123. The 146-residue stretch at 172-317 folds into the KARI C-terminal knotted domain; the sequence is TFKEETETDL…KKLRAKMVWL (146 aa). Asp-180, Glu-184, Glu-216, and Glu-220 together coordinate Mg(2+). Ser-241 provides a ligand contact to substrate.

The protein belongs to the ketol-acid reductoisomerase family. Mg(2+) is required as a cofactor.

It catalyses the reaction (2R)-2,3-dihydroxy-3-methylbutanoate + NADP(+) = (2S)-2-acetolactate + NADPH + H(+). It carries out the reaction (2R,3R)-2,3-dihydroxy-3-methylpentanoate + NADP(+) = (S)-2-ethyl-2-hydroxy-3-oxobutanoate + NADPH + H(+). It participates in amino-acid biosynthesis; L-isoleucine biosynthesis; L-isoleucine from 2-oxobutanoate: step 2/4. Its pathway is amino-acid biosynthesis; L-valine biosynthesis; L-valine from pyruvate: step 2/4. Functionally, involved in the biosynthesis of branched-chain amino acids (BCAA). Catalyzes an alkyl-migration followed by a ketol-acid reduction of (S)-2-acetolactate (S2AL) to yield (R)-2,3-dihydroxy-isovalerate. In the isomerase reaction, S2AL is rearranged via a Mg-dependent methyl migration to produce 3-hydroxy-3-methyl-2-ketobutyrate (HMKB). In the reductase reaction, this 2-ketoacid undergoes a metal-dependent reduction by NADPH to yield (R)-2,3-dihydroxy-isovalerate. This is Ketol-acid reductoisomerase (NADP(+)) from Xanthomonas axonopodis pv. citri (strain 306).